The primary structure comprises 299 residues: Phosphatidylserine decarboxylase proenzyme (299 aa).

Catalysis depends on charge relay system; for autoendoproteolytic cleavage activity residues Asp-90, His-147, and Ser-254. The active-site Schiff-base intermediate with substrate; via pyruvic acid; for decarboxylase activity is the Ser-254. At Ser-254 the chain carries Pyruvic acid (Ser); by autocatalysis.

This sequence belongs to the phosphatidylserine decarboxylase family. PSD-B subfamily. Prokaryotic type I sub-subfamily. Heterodimer of a large membrane-associated beta subunit and a small pyruvoyl-containing alpha subunit. Pyruvate is required as a cofactor. In terms of processing, is synthesized initially as an inactive proenzyme. Formation of the active enzyme involves a self-maturation process in which the active site pyruvoyl group is generated from an internal serine residue via an autocatalytic post-translational modification. Two non-identical subunits are generated from the proenzyme in this reaction, and the pyruvate is formed at the N-terminus of the alpha chain, which is derived from the carboxyl end of the proenzyme. The autoendoproteolytic cleavage occurs by a canonical serine protease mechanism, in which the side chain hydroxyl group of the serine supplies its oxygen atom to form the C-terminus of the beta chain, while the remainder of the serine residue undergoes an oxidative deamination to produce ammonia and the pyruvoyl prosthetic group on the alpha chain. During this reaction, the Ser that is part of the protease active site of the proenzyme becomes the pyruvoyl prosthetic group, which constitutes an essential element of the active site of the mature decarboxylase.

It localises to the cell membrane. The catalysed reaction is a 1,2-diacyl-sn-glycero-3-phospho-L-serine + H(+) = a 1,2-diacyl-sn-glycero-3-phosphoethanolamine + CO2. Its pathway is phospholipid metabolism; phosphatidylethanolamine biosynthesis; phosphatidylethanolamine from CDP-diacylglycerol: step 2/2. Functionally, catalyzes the formation of phosphatidylethanolamine (PtdEtn) from phosphatidylserine (PtdSer). In Erwinia tasmaniensis (strain DSM 17950 / CFBP 7177 / CIP 109463 / NCPPB 4357 / Et1/99), this protein is Phosphatidylserine decarboxylase proenzyme.